A 208-amino-acid polypeptide reads, in one-letter code: MQLGLDFSLVEELVAGVDEVGRGPLCGAVVTAAVILDPLRPIIGLNDSKKLTEARREVLFDEIREKALAWCIARAEVEEIDRLNILHATMLAMQRAVEGLSVTPKLALIDGNRCPRLTVPSAPVVKGDSRVPAIAAASILAKVSRDREMLEMDRLYPGYGIAGHKGYPTPVHLEALQRLGPTPIHRRSFAPVRALLEPVAVDCIAATV.

Residues 12–201 form the RNase H type-2 domain; the sequence is ELVAGVDEVG…VRALLEPVAV (190 aa). A divalent metal cation-binding residues include Asp18, Glu19, and Asp110.

This sequence belongs to the RNase HII family. Mn(2+) is required as a cofactor. Requires Mg(2+) as cofactor.

It is found in the cytoplasm. It carries out the reaction Endonucleolytic cleavage to 5'-phosphomonoester.. Endonuclease that specifically degrades the RNA of RNA-DNA hybrids. The sequence is that of Ribonuclease HII from Ectopseudomonas mendocina (strain ymp) (Pseudomonas mendocina).